Here is an 867-residue protein sequence, read N- to C-terminus: Cadherin-related family member 1 (867 aa).

An N-terminal signal peptide occupies residues 1 to 21 (MGRGPPAVLAPWMLFLSLAQA). At 22–701 (NFAPHFFDNG…LMQTKDNPMK (680 aa)) the chain is on the extracellular side. Cadherin domains lie at 36 to 135 (NGNM…APRF), 136 to 247 (IQEP…GPVF), 248 to 354 (VGTP…PPTF), 360 to 473 (PQNR…VPKF), 474 to 577 (TSHY…YPQF), and 574 to 689 (YPQF…SPMA). 2 N-linked (GlcNAc...) asparagine glycosylation sites follow: N58 and N89. N-linked (GlcNAc...) asparagine glycosylation is found at N288 and N297. Residues 702-722 (AVGVLAGIMAIIVAITVLIST) form a helical membrane-spanning segment. The Cytoplasmic portion of the chain corresponds to 723-867 (ATFWRNKKSN…KKNLHSKAYF (145 aa)). The tract at residues 767-843 (KFVLREAPPN…VAKRKAVGSP (77 aa)) is disordered. The span at 777–786 (ENCNNNSRGS) shows a compositional bias: polar residues. The span at 790-802 (PQAPAPPPPPSPA) shows a compositional bias: pro residues.

Interacts with PROM1. In terms of processing, undergoes proteolytic cleavage; produces a soluble 95 kDa N-terminal fragment and a 25 kDa cell-associated C-terminal fragment. In terms of tissue distribution, expressed in photoreceptor cells of the outer nuclear layer of the retina.

It is found in the cell membrane. Potential calcium-dependent cell-adhesion protein. May be required for the structural integrity of the outer segment (OS) of photoreceptor cells. The protein is Cadherin-related family member 1 (CDHR1) of Bos taurus (Bovine).